The primary structure comprises 336 residues: tRNA N6-adenosine threonylcarbamoyltransferase (336 aa).

Positions 111 and 115 each coordinate Fe cation. Residues 133–137 (LISGG), D166, G179, and N276 contribute to the substrate site. Fe cation is bound at residue D301.

The protein belongs to the KAE1 / TsaD family. The cofactor is Fe(2+).

It localises to the cytoplasm. It carries out the reaction L-threonylcarbamoyladenylate + adenosine(37) in tRNA = N(6)-L-threonylcarbamoyladenosine(37) in tRNA + AMP + H(+). Functionally, required for the formation of a threonylcarbamoyl group on adenosine at position 37 (t(6)A37) in tRNAs that read codons beginning with adenine. Is involved in the transfer of the threonylcarbamoyl moiety of threonylcarbamoyl-AMP (TC-AMP) to the N6 group of A37, together with TsaE and TsaB. TsaD likely plays a direct catalytic role in this reaction. This Wolbachia pipientis subsp. Culex pipiens (strain wPip) protein is tRNA N6-adenosine threonylcarbamoyltransferase.